The primary structure comprises 391 residues: tRNA-specific 2-thiouridylase MnmA (391 aa).

ATP-binding positions include 9–16 (GMSGGVDS) and methionine 35. Residues 95–97 (NPD) are interaction with target base in tRNA. Cysteine 100 (nucleophile) is an active-site residue. Cysteines 100 and 196 form a disulfide. Glycine 124 contributes to the ATP binding site. Positions 146-148 (KDQ) are interaction with tRNA. Cysteine 196 acts as the Cysteine persulfide intermediate in catalysis. Residues 308–309 (RY) form an interaction with tRNA region. Polar residues predominate over residues 372 to 382 (TGQPGQATSTG). The tract at residues 372 to 391 (TGQPGQATSTGHAPALAEAR) is disordered.

The protein belongs to the MnmA/TRMU family.

It localises to the cytoplasm. It carries out the reaction S-sulfanyl-L-cysteinyl-[protein] + uridine(34) in tRNA + AH2 + ATP = 2-thiouridine(34) in tRNA + L-cysteinyl-[protein] + A + AMP + diphosphate + H(+). In terms of biological role, catalyzes the 2-thiolation of uridine at the wobble position (U34) of tRNA, leading to the formation of s(2)U34. This chain is tRNA-specific 2-thiouridylase MnmA, found in Burkholderia cenocepacia (strain ATCC BAA-245 / DSM 16553 / LMG 16656 / NCTC 13227 / J2315 / CF5610) (Burkholderia cepacia (strain J2315)).